The chain runs to 286 residues: Bifunctional protein FolD 2 (286 aa).

NADP(+) contacts are provided by residues 165 to 167 (GRG), T192, and I233.

This sequence belongs to the tetrahydrofolate dehydrogenase/cyclohydrolase family. Homodimer.

It carries out the reaction (6R)-5,10-methylene-5,6,7,8-tetrahydrofolate + NADP(+) = (6R)-5,10-methenyltetrahydrofolate + NADPH. It catalyses the reaction (6R)-5,10-methenyltetrahydrofolate + H2O = (6R)-10-formyltetrahydrofolate + H(+). It participates in one-carbon metabolism; tetrahydrofolate interconversion. Functionally, catalyzes the oxidation of 5,10-methylenetetrahydrofolate to 5,10-methenyltetrahydrofolate and then the hydrolysis of 5,10-methenyltetrahydrofolate to 10-formyltetrahydrofolate. The protein is Bifunctional protein FolD 2 of Salinispora tropica (strain ATCC BAA-916 / DSM 44818 / JCM 13857 / NBRC 105044 / CNB-440).